A 475-amino-acid polypeptide reads, in one-letter code: Ribulose bisphosphate carboxylase large chain (475 aa).

Residues 1 to 2 constitute a propeptide that is removed on maturation; the sequence is MS. Pro3 is modified (N-acetylproline). Lys14 is subject to N6,N6,N6-trimethyllysine. Substrate-binding residues include Asn123 and Thr173. Residue Lys175 is the Proton acceptor of the active site. Residue Lys177 coordinates substrate. Residues Lys201, Asp203, and Glu204 each coordinate Mg(2+). Lys201 carries the N6-carboxylysine modification. His294 serves as the catalytic Proton acceptor. The substrate site is built by Arg295, His327, and Ser379.

It belongs to the RuBisCO large chain family. Type I subfamily. In terms of assembly, heterohexadecamer of 8 large chains and 8 small chains; disulfide-linked. The disulfide link is formed within the large subunit homodimers. Mg(2+) serves as cofactor. Post-translationally, the disulfide bond which can form in the large chain dimeric partners within the hexadecamer appears to be associated with oxidative stress and protein turnover.

Its subcellular location is the plastid. It localises to the chloroplast. The enzyme catalyses 2 (2R)-3-phosphoglycerate + 2 H(+) = D-ribulose 1,5-bisphosphate + CO2 + H2O. It catalyses the reaction D-ribulose 1,5-bisphosphate + O2 = 2-phosphoglycolate + (2R)-3-phosphoglycerate + 2 H(+). RuBisCO catalyzes two reactions: the carboxylation of D-ribulose 1,5-bisphosphate, the primary event in carbon dioxide fixation, as well as the oxidative fragmentation of the pentose substrate in the photorespiration process. Both reactions occur simultaneously and in competition at the same active site. The protein is Ribulose bisphosphate carboxylase large chain of Cycas taitungensis (Prince sago).